The following is a 202-amino-acid chain: Dephospho-CoA kinase (202 aa).

Residues Lys6–Leu202 enclose the DPCK domain. Ser14–Glu19 contacts ATP.

This sequence belongs to the CoaE family.

It localises to the cytoplasm. It carries out the reaction 3'-dephospho-CoA + ATP = ADP + CoA + H(+). It functions in the pathway cofactor biosynthesis; coenzyme A biosynthesis; CoA from (R)-pantothenate: step 5/5. In terms of biological role, catalyzes the phosphorylation of the 3'-hydroxyl group of dephosphocoenzyme A to form coenzyme A. In Chlamydia pneumoniae (Chlamydophila pneumoniae), this protein is Dephospho-CoA kinase.